Here is a 118-residue protein sequence, read N- to C-terminus: Holin-like protein CidA 2 (118 aa).

4 consecutive transmembrane segments (helical) span residues 4–26, 33–52, 62–84, and 91–113; these read VTLL…IQGV, GSLI…VLPL, LIVF…GSFL, and IFLL…SQLL.

The protein belongs to the CidA/LrgA family. CidA subfamily.

The protein localises to the cell membrane. Increases the activity of extracellular murein hydrolases possibly by mediating their export via hole formation. Inhibited by the antiholin-like proteins LrgAB. In an unstressed cell, the LrgAB products probably inhibit the function of the CidA protein. When a cell is stressed by the addition of antibiotics or by other factors in the environment, CidA possibly oligomerizes within the bacterial cell membrane, creating lesions that disrupt the proton motive force, which in turn results in loss of cell viability. These lesions are also hypothesized to regulate the subsequent cell lysis by either allowing the murein hydrolases access to the cell wall substrate and/or regulating their activity by a possible change in the cell wall pH that results from loss of membrane potential. The protein is Holin-like protein CidA 2 (cidA2) of Bacillus cereus (strain ATCC 14579 / DSM 31 / CCUG 7414 / JCM 2152 / NBRC 15305 / NCIMB 9373 / NCTC 2599 / NRRL B-3711).